The chain runs to 365 residues: uncharacterized protein (365 aa).

The Radical SAM core domain occupies 45 to 289 (FSIGKSLTII…LKEVKKSNPK (245 aa)). [4Fe-4S] cluster is bound by residues Cys60, Cys68, and Cys71.

[4Fe-4S] cluster is required as a cofactor.

This is an uncharacterized protein from Methanocaldococcus jannaschii (strain ATCC 43067 / DSM 2661 / JAL-1 / JCM 10045 / NBRC 100440) (Methanococcus jannaschii).